Here is a 278-residue protein sequence, read N- to C-terminus: Endoplasmic reticulum junction formation protein lunapark (278 aa).

The Cytoplasmic segment spans residues 1 to 45 (MFSALGKWVRGSRNDKDFVTKYTADLSQITSQIHQLDVALKKSQS). A helical membrane pass occupies residues 46 to 66 (ILSQWQSNLTFYGIALTVLAL). The Lumenal portion of the chain corresponds to 67–77 (SYTYWEYHGYR). Residues 78-98 (PYLVVTALLCIGSLILFKWAL) form a helical membrane-spanning segment. Residues 99 to 278 (TKLYAFYNNN…PSQSEKEKTK (180 aa)) lie on the Cytoplasmic side of the membrane. The stretch at 107 to 183 (NNRLRKLAKL…ELEKFKKESH (77 aa)) forms a coiled coil. A C4-type; plays a role in ER morphology zinc finger spans residues 223-247 (CPQCHWKSNCYRLASKPIIFICPHC). Residues 258–278 (EDAIEAKQPAQPSQSEKEKTK) form a disordered region.

It belongs to the lunapark family. Interacts with RTN1; this interaction is negatively regulated by SEY1. Interacts with SEY1 and YOP1.

The protein localises to the endoplasmic reticulum membrane. Functionally, plays a role in tubular endoplasmic reticulum network formation and maintenance. Works in conjunction with the ER shaping proteins (reticulons RTN1 and RTN2, YOP1), and in antagonism to SEY1 to maintain the network in a dynamic equilibrium. May counterbalance SEY1-directed polygon formation by promoting polygon loss through ring closure. The sequence is that of Endoplasmic reticulum junction formation protein lunapark (LNP1) from Saccharomyces cerevisiae (strain ATCC 204508 / S288c) (Baker's yeast).